Here is a 71-residue protein sequence, read N- to C-terminus: uncharacterized protein (71 aa).

The helical transmembrane segment at 12–32 (FLVSIAFFGLAPTIPLLAIAL) threads the bilayer.

Its subcellular location is the membrane. This is an uncharacterized protein from Sinorhizobium fredii (strain NBRC 101917 / NGR234).